The chain runs to 65 residues: UPF0434 protein BH12860 (65 aa).

Belongs to the UPF0434 family.

The protein is UPF0434 protein BH12860 of Bartonella henselae (strain ATCC 49882 / DSM 28221 / CCUG 30454 / Houston 1) (Rochalimaea henselae).